The chain runs to 194 residues: Protein GrpE (194 aa).

Residues 1–12 (MNKQKNNRERTP) show a composition bias toward basic and acidic residues. The tract at residues 1-44 (MNKQKNNRERTPQPEQDTERDEQLTNSHENDIDSAPAAEENDKV) is disordered.

It belongs to the GrpE family. As to quaternary structure, homodimer.

It localises to the cytoplasm. Participates actively in the response to hyperosmotic and heat shock by preventing the aggregation of stress-denatured proteins, in association with DnaK and GrpE. It is the nucleotide exchange factor for DnaK and may function as a thermosensor. Unfolded proteins bind initially to DnaJ; upon interaction with the DnaJ-bound protein, DnaK hydrolyzes its bound ATP, resulting in the formation of a stable complex. GrpE releases ADP from DnaK; ATP binding to DnaK triggers the release of the substrate protein, thus completing the reaction cycle. Several rounds of ATP-dependent interactions between DnaJ, DnaK and GrpE are required for fully efficient folding. The chain is Protein GrpE from Porphyromonas gingivalis (strain ATCC 33277 / DSM 20709 / CIP 103683 / JCM 12257 / NCTC 11834 / 2561).